The primary structure comprises 234 residues: Large ribosomal subunit protein uL1 (234 aa).

It belongs to the universal ribosomal protein uL1 family. In terms of assembly, part of the 50S ribosomal subunit.

Its function is as follows. Binds directly to 23S rRNA. The L1 stalk is quite mobile in the ribosome, and is involved in E site tRNA release. Protein L1 is also a translational repressor protein, it controls the translation of the L11 operon by binding to its mRNA. This chain is Large ribosomal subunit protein uL1, found in Geobacter metallireducens (strain ATCC 53774 / DSM 7210 / GS-15).